A 1305-amino-acid polypeptide reads, in one-letter code: MLQAQKQSDPILPWGASWAGRGQTLRARSTDSLDGPGEGSVQPVPTTGGPGTKGKPGKRLSAPRGPFPRLADCAHFHYENVDFGHIQLLLSPEREGPSLSGENELVFGVQVTCQGRSWPVLRSYDDFRSLDAHLHRCIFDRRFSCLPELPPPPEGTRAAQMLVPLLLQYLETLSGLVDSNLNCGPVLTWMELDNHGRRLLLSEEASLNIPAVAAAHVVKRYTAQAPDELSFEVGDIVSVIDMPPTEDRSWWRGKRGFQVGFFPSECVELFTERPGPGLKADADSPLCGIPAPQGISSLTSAVPRPRGKLAGLLRTFMRSRPSRQRLRQRGILRQRVFGCDLGEHLSNSGQDVPQVLRCCSEFIEAHGVVDGIYRLSGVSSNIQRLRHEFDSERIPELSGPAFLQDIHSVSSLCKLYFRELPNPLLTYQLYGKFSEAMSVPGEEERLVRVHDVIQQLPPPHYRTLEYLLRHLARMARHSANTSMHARNLAIVWAPNLLRSMELESVGLGGAAAFREVRVQSVVVEFLLTHVEVLFSDTFTSAGLDPAGRCLLPRPKSLAGSSPSTRLLTLEEAQARTQGRLGTPTEPTTPKTPASPVERRKRERAEKQRKPGGSSWKTFFALGRGPSIPRKKPLPWLGGSRAPPQPSGSRPDTVTLRSAKSEESLSSQASGAGLQRLHRLRRPHSSSDAFPVGPAPAGSCESLSSSSSSSSSSSSSSSSESSAGGLGPLSGSPSHRTSAWLDDGDDLDFSPPRCLEGLRGLDFDPLTFRCSSPTPGDPAPPASPAPPASASAFPPRATPQALSPHGPTKPASPTALDISEPLAVSVPPAVLELLGAGGTPASATPTPALSPHLIPLLLRGAEAQLSDTCQQEISSKLAPTRGAPGQQSPGGMDSPLLPPPLPLLRPGGAPPPPPKNPARLMALALAERAQQVAEQQSQQEQGGTPPAPHSPFRRSLSLEVGGEPVGTSGSGIHPPSLAHPGAWAPGPPPYLPRQQSDGSLVRSQRPLGTSRRSPRGPSQVSAHLRASGAYRDAPEMAAQSPCSVPSQGSNPSFFSTPRECLPPFLGVPKQGLYSLGPPSFPPSSPAPVWRNSLGAPSALDRGENLYYEIGVGEGTSYSGPSRSWSPFRSMPPDRHNASYGMLGQSPPLHRSPDFLLSYPPPPSCFPPEHLTHSVSQRLARRPTRPEPLYVNLALGPRGPSPASSSSSSPPAHPRSRSDPGPPVPRLPQKQRAPWGPHTPHRVPGPWGSPEPFLLYRPAPPSYGRGGEVRGSLYRNGGHRGEGAGPPPPYPTPSWSLHSEGQTRSYC.

The segment at Met1 to Arg64 is disordered. Position 32 is a phosphoserine (Ser32). The PX; atypical domain occupies Phe83–Leu192. In terms of domain architecture, SH3 spans Pro210–Glu272. The 196-residue stretch at Cys339–Phe534 folds into the Rho-GAP domain. Disordered stretches follow at residues Arg575–Ser818, Leu864–Ser1054, and Ser1115–Cys1305. Low complexity predominate over residues Thr582–Pro595. Residue Ser594 is modified to Phosphoserine. Positions Val596–Arg608 are enriched in basic and acidic residues. The segment covering Ser646–Ser669 has biased composition (polar residues). Phosphoserine is present on Ser660. Over residues Ala694–Ser733 the composition is skewed to low complexity. Position 749 is a phosphoserine (Ser749). The segment covering Pro774–Pro786 has biased composition (pro residues). A compositionally biased stretch (low complexity) spans Ala787 to Pro798. The span at Leu864–Ser873 shows a compositional bias: polar residues. Over residues Leu895–Asn915 the composition is skewed to pro residues. Over residues Pro916 to Gln940 the composition is skewed to low complexity. Polar residues-rich tracts occupy residues Arg992–Ser1020, Ser1039–Ser1054, and Ser1115–Pro1125. Tyr1188 carries the phosphotyrosine modification. The span at Gly1194–Pro1208 shows a compositional bias: low complexity. The residue at position 1263 (Arg1263) is an Omega-N-methylarginine. Polar residues predominate over residues Ser1292–Cys1305.

This sequence belongs to the PX domain-containing GAP family. As to quaternary structure, specifically interacts with CDC42 and RHOQ/TC10 through its Rho-GAP domain. Interacts with NEK6. Highly expressed in brain and testis. Also expressed in white adipose tissue (WAT) and muscle at a low level.

The protein localises to the cell membrane. May be involved in several stages of intracellular trafficking. Could play an important role in the regulation of glucose transport by insulin. May act as a downstream effector of RHOQ/TC10 in the regulation of insulin-stimulated glucose transport. In Mus musculus (Mouse), this protein is Rho GTPase-activating protein 33 (Arhgap33).